We begin with the raw amino-acid sequence, 205 residues long: Guanylate kinase (205 aa).

In terms of domain architecture, Guanylate kinase-like spans 5–184 (GLLIVLSGPS…AVQKIKGIVE (180 aa)). 12 to 19 (GPSGVGKG) provides a ligand contact to ATP.

This sequence belongs to the guanylate kinase family.

The protein resides in the cytoplasm. It carries out the reaction GMP + ATP = GDP + ADP. Its function is as follows. Essential for recycling GMP and indirectly, cGMP. The polypeptide is Guanylate kinase (Listeria innocua serovar 6a (strain ATCC BAA-680 / CLIP 11262)).